A 385-amino-acid polypeptide reads, in one-letter code: MVNLNKVQPRSGGDHYLALGIEGSANKLGVGILKHPMLSQHKQGSLSHDCQAEILSNIRDTYITPPGEGFLPRDTARHHRNWVVRLVRRALVEAGIEDPRLLDVICFTKGPGMGAPLHSVVVAARTMSMLWDVPLVAVNHCIGHIEMGREITKAENPVVLYVSGGNTQVIAYSENRYRIFGETLDIAIGNCLDRFARTLKIPNDPSPGYNIEQLAKQCKNKDRLVELPYTVKGMDLSMSGILAHIDSLAKDLFRRNTKNYKLFDRETGKQLVTVEDLCYSLQEHLFAMLVEITERAMAHVNSNQVLIVGGVGCNVRLQQMMASMCQSRADGQVHATDERFCIDNGVMIAQAGLLQYRMGDIVKDFSETVVTQRFRTDEVYVSWRD.

His-140, His-144, and Tyr-161 together coordinate a divalent metal cation. Substrate-binding positions include 161–165 (YVSGG), Asp-193, Gly-208, Glu-212, and Asn-314. Asp-343 contributes to the a divalent metal cation binding site.

It belongs to the KAE1 / TsaD family. As to quaternary structure, component of the EKC/KEOPS complex composed of at least BUD32, CGI121, GON7, KAE1 and PCC1; the whole complex dimerizes. A divalent metal cation is required as a cofactor.

It is found in the cytoplasm. It localises to the nucleus. The catalysed reaction is L-threonylcarbamoyladenylate + adenosine(37) in tRNA = N(6)-L-threonylcarbamoyladenosine(37) in tRNA + AMP + H(+). In terms of biological role, component of the EKC/KEOPS complex that is required for the formation of a threonylcarbamoyl group on adenosine at position 37 (t(6)A37) in tRNAs that read codons beginning with adenine. The complex is probably involved in the transfer of the threonylcarbamoyl moiety of threonylcarbamoyl-AMP (TC-AMP) to the N6 group of A37. KAE1 likely plays a direct catalytic role in this reaction, but requires other protein(s) of the complex to fulfill this activity. The EKC/KEOPS complex also promotes both telomere uncapping and telomere elongation. The complex is required for efficient recruitment of transcriptional coactivators. This chain is tRNA N6-adenosine threonylcarbamoyltransferase, found in Eremothecium gossypii (strain ATCC 10895 / CBS 109.51 / FGSC 9923 / NRRL Y-1056) (Yeast).